Reading from the N-terminus, the 194-residue chain is Ubiquitin-conjugating enzyme E2 T (194 aa).

One can recognise a UBC core domain in the interval 2 to 152 (QRVSRLKREM…AKKWTAEHAI (151 aa)). The active-site Glycyl thioester intermediate is the Cys86. Basic and acidic residues-rich tracts occupy residues 158 to 170 (CVET…ENKN) and 185 to 194 (NLEHTKKVCL). Residues 158–194 (CVETDGKTPENKNLKTSHKREALSAQENLEHTKKVCL) form a disordered region.

It belongs to the ubiquitin-conjugating enzyme family.

It is found in the nucleus. The enzyme catalyses S-ubiquitinyl-[E1 ubiquitin-activating enzyme]-L-cysteine + [E2 ubiquitin-conjugating enzyme]-L-cysteine = [E1 ubiquitin-activating enzyme]-L-cysteine + S-ubiquitinyl-[E2 ubiquitin-conjugating enzyme]-L-cysteine.. Its pathway is protein modification; protein ubiquitination. In terms of biological role, accepts ubiquitin from the E1 complex and catalyzes its covalent attachment to other proteins. Catalyzes monoubiquitination. Involved in DNA repair. In Danio rerio (Zebrafish), this protein is Ubiquitin-conjugating enzyme E2 T (ube2t).